Consider the following 309-residue polypeptide: tRNA dimethylallyltransferase (309 aa).

13 to 20 (GPTAVGKS) contacts ATP. Position 15 to 20 (15 to 20 (TAVGKS)) interacts with substrate.

The protein belongs to the IPP transferase family. As to quaternary structure, monomer. The cofactor is Mg(2+).

It catalyses the reaction adenosine(37) in tRNA + dimethylallyl diphosphate = N(6)-dimethylallyladenosine(37) in tRNA + diphosphate. In terms of biological role, catalyzes the transfer of a dimethylallyl group onto the adenine at position 37 in tRNAs that read codons beginning with uridine, leading to the formation of N6-(dimethylallyl)adenosine (i(6)A). This is tRNA dimethylallyltransferase from Lacticaseibacillus casei (strain BL23) (Lactobacillus casei).